The primary structure comprises 294 residues: N-acetylmuramic acid 6-phosphate etherase (294 aa).

Positions 54–217 constitute an SIS domain; the sequence is VIQSFEEEGR…STASMIGVGK (164 aa). Glutamate 82 (proton donor) is an active-site residue. Glutamate 113 is a catalytic residue.

It belongs to the GCKR-like family. MurNAc-6-P etherase subfamily. In terms of assembly, homodimer.

It carries out the reaction N-acetyl-D-muramate 6-phosphate + H2O = N-acetyl-D-glucosamine 6-phosphate + (R)-lactate. It participates in amino-sugar metabolism; N-acetylmuramate degradation. Specifically catalyzes the cleavage of the D-lactyl ether substituent of MurNAc 6-phosphate, producing GlcNAc 6-phosphate and D-lactate. The chain is N-acetylmuramic acid 6-phosphate etherase from Bacillus cereus (strain AH820).